The sequence spans 179 residues: Adenine phosphoribosyltransferase (179 aa).

This sequence belongs to the purine/pyrimidine phosphoribosyltransferase family. In terms of assembly, homodimer.

The protein resides in the cytoplasm. It catalyses the reaction AMP + diphosphate = 5-phospho-alpha-D-ribose 1-diphosphate + adenine. The protein operates within purine metabolism; AMP biosynthesis via salvage pathway; AMP from adenine: step 1/1. Functionally, catalyzes a salvage reaction resulting in the formation of AMP, that is energically less costly than de novo synthesis. This Dinoroseobacter shibae (strain DSM 16493 / NCIMB 14021 / DFL 12) protein is Adenine phosphoribosyltransferase.